The sequence spans 232 residues: Pseudaminic acid cytidylyltransferase (232 aa).

Belongs to the CMP-NeuNAc synthase family. The cofactor is Mg(2+).

The enzyme catalyses pseudaminate + CTP = CMP-pseudaminate + diphosphate. In terms of biological role, catalyzes the final step in the biosynthesis of pseudaminic acid, a sialic-acid-like sugar that is used to modify flagellin. Mediates the activation of pseudaminic acid with CMP by forming CMP-pseudaminic acid. The polypeptide is Pseudaminic acid cytidylyltransferase (pseF) (Campylobacter jejuni subsp. jejuni serotype O:23/36 (strain 81-176)).